The sequence spans 294 residues: Cyclin-G1 (294 aa).

It belongs to the cyclin family. Cyclin G subfamily.

It is found in the nucleus. In terms of biological role, may play a role in growth regulation. Is associated with G2/M phase arrest in response to DNA damage. May be an intermediate by which p53 mediates its role as an inhibitor of cellular proliferation. This is Cyclin-G1 (Ccng1) from Rattus norvegicus (Rat).